A 326-amino-acid polypeptide reads, in one-letter code: Tetraacyldisaccharide 4'-kinase (326 aa).

Residue 53–60 participates in ATP binding; the sequence is SVGGNGKT.

Belongs to the LpxK family.

It carries out the reaction a lipid A disaccharide + ATP = a lipid IVA + ADP + H(+). Its pathway is glycolipid biosynthesis; lipid IV(A) biosynthesis; lipid IV(A) from (3R)-3-hydroxytetradecanoyl-[acyl-carrier-protein] and UDP-N-acetyl-alpha-D-glucosamine: step 6/6. Its function is as follows. Transfers the gamma-phosphate of ATP to the 4'-position of a tetraacyldisaccharide 1-phosphate intermediate (termed DS-1-P) to form tetraacyldisaccharide 1,4'-bis-phosphate (lipid IVA). The protein is Tetraacyldisaccharide 4'-kinase of Actinobacillus pleuropneumoniae serotype 5b (strain L20).